A 274-amino-acid polypeptide reads, in one-letter code: Acetyl-coenzyme A carboxylase carboxyl transferase subunit alpha (274 aa).

In terms of domain architecture, CoA carboxyltransferase C-terminal spans 2–250; that stretch reads NKEFIKSIVV…KKEIMNAMNE (249 aa).

It belongs to the AccA family. In terms of assembly, acetyl-CoA carboxylase is a heterohexamer composed of biotin carboxyl carrier protein (AccB), biotin carboxylase (AccC) and two subunits each of ACCase subunit alpha (AccA) and ACCase subunit beta (AccD).

It is found in the cytoplasm. It catalyses the reaction N(6)-carboxybiotinyl-L-lysyl-[protein] + acetyl-CoA = N(6)-biotinyl-L-lysyl-[protein] + malonyl-CoA. It participates in lipid metabolism; malonyl-CoA biosynthesis; malonyl-CoA from acetyl-CoA: step 1/1. Functionally, component of the acetyl coenzyme A carboxylase (ACC) complex. First, biotin carboxylase catalyzes the carboxylation of biotin on its carrier protein (BCCP) and then the CO(2) group is transferred by the carboxyltransferase to acetyl-CoA to form malonyl-CoA. The chain is Acetyl-coenzyme A carboxylase carboxyl transferase subunit alpha from Clostridium botulinum (strain Alaska E43 / Type E3).